Consider the following 293-residue polypeptide: tRNA-cytidine(32) 2-sulfurtransferase (293 aa).

The PP-loop motif signature appears at 62–67 (SGGKDS). Residues Cys-137, Cys-140, and Cys-228 each contribute to the [4Fe-4S] cluster site.

Belongs to the TtcA family. In terms of assembly, homodimer. It depends on Mg(2+) as a cofactor. Requires [4Fe-4S] cluster as cofactor.

It localises to the cytoplasm. The enzyme catalyses cytidine(32) in tRNA + S-sulfanyl-L-cysteinyl-[cysteine desulfurase] + AH2 + ATP = 2-thiocytidine(32) in tRNA + L-cysteinyl-[cysteine desulfurase] + A + AMP + diphosphate + H(+). The protein operates within tRNA modification. Functionally, catalyzes the ATP-dependent 2-thiolation of cytidine in position 32 of tRNA, to form 2-thiocytidine (s(2)C32). The sulfur atoms are provided by the cysteine/cysteine desulfurase (IscS) system. The chain is tRNA-cytidine(32) 2-sulfurtransferase from Brucella melitensis biotype 1 (strain ATCC 23456 / CCUG 17765 / NCTC 10094 / 16M).